The following is a 565-amino-acid chain: Proline--tRNA ligase (565 aa).

It belongs to the class-II aminoacyl-tRNA synthetase family. ProS type 1 subfamily. As to quaternary structure, homodimer.

It is found in the cytoplasm. The enzyme catalyses tRNA(Pro) + L-proline + ATP = L-prolyl-tRNA(Pro) + AMP + diphosphate. Functionally, catalyzes the attachment of proline to tRNA(Pro) in a two-step reaction: proline is first activated by ATP to form Pro-AMP and then transferred to the acceptor end of tRNA(Pro). As ProRS can inadvertently accommodate and process non-cognate amino acids such as alanine and cysteine, to avoid such errors it has two additional distinct editing activities against alanine. One activity is designated as 'pretransfer' editing and involves the tRNA(Pro)-independent hydrolysis of activated Ala-AMP. The other activity is designated 'posttransfer' editing and involves deacylation of mischarged Ala-tRNA(Pro). The misacylated Cys-tRNA(Pro) is not edited by ProRS. This Francisella tularensis subsp. tularensis (strain FSC 198) protein is Proline--tRNA ligase.